The following is a 441-amino-acid chain: GTPase Der (441 aa).

EngA-type G domains are found at residues 4–169 (PIVA…PEGS) and 178–353 (PKVA…DAQT). GTP contacts are provided by residues 10–17 (GRPNVGKS), 57–61 (DTGGI), 120–123 (NKVD), 184–191 (GKPNVGKS), 231–235 (DTAGL), and 296–299 (NKWD). The KH-like domain maps to 354-438 (MRIPTGVLNE…SIRFINRERK (85 aa)).

The protein belongs to the TRAFAC class TrmE-Era-EngA-EngB-Septin-like GTPase superfamily. EngA (Der) GTPase family. Associates with the 50S ribosomal subunit.

In terms of biological role, GTPase that plays an essential role in the late steps of ribosome biogenesis. This is GTPase Der from Lachnospira eligens (strain ATCC 27750 / DSM 3376 / VPI C15-48 / C15-B4) (Eubacterium eligens).